The chain runs to 358 residues: CCAAT/enhancer-binding protein alpha (358 aa).

Residues 1-55 (MESADFYEAEPRPPMSSHLQSPPHAPSNAAFGFPRGAGPAPPPAPPAAPEPLGGI) form a disordered region. The tract at residues 1 to 70 (MESADFYEAE…SIDISAYIDP (70 aa)) is required to repress E2F1:TFDP1-mediated transcription, to inhibit cell cycle and to induce adipocyte differentiation. The segment covering 29-38 (AAFGFPRGAG) has biased composition (low complexity). A compositionally biased stretch (pro residues) spans 39-49 (PAPPPAPPAAP). The interval 54–72 (GICEHETSIDISAYIDPAA) is required for interaction with TRIB1. A required to induce adipocyte differentiation region spans residues 126-200 (PPGYGCAAAG…HASPAHLAAP (75 aa)). The residue at position 159 (Lys-159) is an N6-acetyllysine; alternate. A Glycyl lysine isopeptide (Lys-Gly) (interchain with G-Cter in SUMO); alternate cross-link involves residue Lys-159. A Glycyl lysine isopeptide (Lys-Gly) (interchain with G-Cter in SUMO2); alternate cross-link involves residue Lys-159. Disordered regions lie at residues 176–195 (LFPY…ASPA) and 213–310 (TMHL…NVET). Over residues 179 to 191 (YQPPPPPPPPHPH) the composition is skewed to pro residues. Residues 180–194 (QPPPPPPPPHPHASP) form a required to functionally cooperate with SREBF1 in promoter activation region. The residue at position 193 (Ser-193) is a Phosphoserine. Over residues 220–234 (HPTPPPTPVPSPHPA) the composition is skewed to pro residues. Residues Thr-222 and Thr-226 each carry the phosphothreonine; by GSK3 modification. Ser-230 carries the phosphoserine; by GSK3 modification. The interaction with FOXO1 stretch occupies residues 240–358 (AGLPGPGGSL…SLVKAMGNCA (119 aa)). The segment covering 261–271 (TGGGGGGGAGA) has biased composition (gly residues). Basic and acidic residues predominate over residues 276-292 (KSVDKNSNEYRVRRERN). The bZIP domain maps to 282–345 (SNEYRVRRER…DTLRGIFRQL (64 aa)). Residues 285 to 300 (YRVRRERNNIAVRKSR) mediate DNA binding. Residues 286–313 (RVRRERNNIAVRKSRDKAKQRNVETQQK) form a basic motif region. The leucine-zipper stretch occupies residues 317–345 (LTSDNDRLRKRVEQLSRELDTLRGIFRQL).

The protein belongs to the bZIP family. C/EBP subfamily. As to quaternary structure, binds DNA as a homodimer and as a heterodimer. Can form stable heterodimers with CEBPB, CEBPD, CEBPE and CEBPG. Can form stable homodimers (also isoform 2 and isoform 3 dimers) and heterodimers with CEBPB (with isoform 2 and isoform 3) and CEBPG. Interacts with PRDM16. Interacts with UBN1. Interacts with ZNF638; this interaction increases transcriptional activation. Interacts with the complex TFDP2:E2F1; the interaction prevents CEBPA binding to target gene promoters and represses its transcriptional activity. Interacts with RB1. Interacts (when phosphorylated at Ser-193) with CDK2, CDK4, E2F4 and SMARCA2. Interacts with SREBPF1. Interacts with FOXO1 (via the Fork-head domain); the interaction increases when FOXO1 is deacetylated. Interacts with SIX1. Interacts (via recognition sequence) with TRIB1. Interacts with TAF1A and UBTF. In terms of assembly, interacts with NPM1. Post-translationally, sumoylated, sumoylation blocks the inhibitory effect on cell proliferation by disrupting the interaction with SMARCA2. In terms of processing, phosphorylation at Ser-193 is required for interaction with CDK2, CDK4 and SWI/SNF complex leading to cell cycle inhibition. Dephosphorylated at Ser-193 by protein phosphatase 2A (PP2A) through PI3K/AKT signaling pathway regulation. Phosphorylation at Thr-222 and Thr-226 by GSK3 is constitutive in adipose tissue and lung. In liver, both Thr-222 and Thr-226 are phosphorylated only during feeding but not during fasting. Phosphorylation of the GSK3 consensus sites selectively decreases transactivation activity on IRE-controlled promoters. Ubiquitinated by COP1 upon interaction with TRIB1. Isoform 2 and isoform 3 are expressed in liver (at protein level).

Its subcellular location is the nucleus. It is found in the nucleolus. Transcription factor that coordinates proliferation arrest and the differentiation of myeloid progenitors, adipocytes, hepatocytes, and cells of the lung and the placenta. Binds directly to the consensus DNA sequence 5'-T[TG]NNGNAA[TG]-3' acting as an activator on distinct target genes. During early embryogenesis, plays essential and redundant functions with CEBPB. Essential for the transition from common myeloid progenitors (CMP) to granulocyte/monocyte progenitors (GMP). Critical for the proper development of the liver and the lung. Necessary for terminal adipocyte differentiation, is required for postnatal maintenance of systemic energy homeostasis and lipid storage. To regulate these different processes at the proper moment and tissue, interplays with other transcription factors and modulators. Down-regulates the expression of genes that maintain cells in an undifferentiated and proliferative state through E2F1 repression, which is critical for its ability to induce adipocyte and granulocyte terminal differentiation. Reciprocally E2F1 blocks adipocyte differentiation by binding to specific promoters and repressing CEBPA binding to its target gene promoters. Proliferation arrest also depends on a functional binding to SWI/SNF complex. In liver, regulates gluconeogenesis and lipogenesis through different mechanisms. To regulate gluconeogenesis, functionally cooperates with FOXO1 binding to IRE-controlled promoters and regulating the expression of target genes such as PCK1 or G6PC1. To modulate lipogenesis, interacts and transcriptionally synergizes with SREBF1 in promoter activation of specific lipogenic target genes such as ACAS2. In adipose tissue, seems to act as FOXO1 coactivator accessing to ADIPOQ promoter through FOXO1 binding sites. In terms of biological role, can act as dominant-negative. Binds DNA and have transctivation activity, even if much less efficiently than isoform 2. Does not inhibit cell proliferation. Its function is as follows. Directly and specifically enhances ribosomal DNA transcription interacting with RNA polymerase I-specific cofactors and inducing histone acetylation. In Rattus norvegicus (Rat), this protein is CCAAT/enhancer-binding protein alpha.